Consider the following 465-residue polypeptide: Ribulose bisphosphate carboxylase large chain (465 aa).

At K4 the chain carries N6,N6,N6-trimethyllysine. Substrate-binding residues include N113 and T163. The active-site Proton acceptor is the K165. K167 serves as a coordination point for substrate. Mg(2+) is bound by residues K191, D193, and E194. Residue K191 is modified to N6-carboxylysine. H284 acts as the Proton acceptor in catalysis. Substrate is bound by residues R285, H317, and S369.

This sequence belongs to the RuBisCO large chain family. Type I subfamily. Heterohexadecamer of 8 large chains and 8 small chains; disulfide-linked. The disulfide link is formed within the large subunit homodimers. Mg(2+) is required as a cofactor. The disulfide bond which can form in the large chain dimeric partners within the hexadecamer appears to be associated with oxidative stress and protein turnover.

It localises to the plastid. The protein localises to the chloroplast. The catalysed reaction is 2 (2R)-3-phosphoglycerate + 2 H(+) = D-ribulose 1,5-bisphosphate + CO2 + H2O. It catalyses the reaction D-ribulose 1,5-bisphosphate + O2 = 2-phosphoglycolate + (2R)-3-phosphoglycerate + 2 H(+). RuBisCO catalyzes two reactions: the carboxylation of D-ribulose 1,5-bisphosphate, the primary event in carbon dioxide fixation, as well as the oxidative fragmentation of the pentose substrate in the photorespiration process. Both reactions occur simultaneously and in competition at the same active site. The sequence is that of Ribulose bisphosphate carboxylase large chain from Cornus canadensis (Bunchberry dogwood).